A 349-amino-acid chain; its full sequence is tRNA pseudouridine synthase D (349 aa).

Phe-27 is a binding site for substrate. The Nucleophile role is filled by Asp-80. Residue Asn-129 coordinates substrate. In terms of domain architecture, TRUD spans Gly-155–Leu-303. Residue Phe-329 coordinates substrate.

The protein belongs to the pseudouridine synthase TruD family.

It carries out the reaction uridine(13) in tRNA = pseudouridine(13) in tRNA. Functionally, responsible for synthesis of pseudouridine from uracil-13 in transfer RNAs. This Escherichia coli O7:K1 (strain IAI39 / ExPEC) protein is tRNA pseudouridine synthase D.